The primary structure comprises 389 residues: Sinapine esterase (389 aa).

The N-terminal stretch at 1-25 (MASSLKKLITSFLLFFFYTIIVASS) is a signal peptide. Catalysis depends on Ser41, which acts as the Nucleophile. 3 N-linked (GlcNAc...) asparagine glycosylation sites follow: Asn104, Asn137, and Asn320. Residues Asp345 and His348 contribute to the active site. Residues Asn372 and Asn383 are each glycosylated (N-linked (GlcNAc...) asparagine).

This sequence belongs to the 'GDSL' lipolytic enzyme family. As to expression, expressed in most tissues or organs of the mature seedlings. Not expressed in roots of mature seedlings.

It is found in the secreted. The catalysed reaction is O-sinapoylcholine + H2O = (E)-sinapate + choline + H(+). Inhibited by PMSF. Functionally, sinapine esterase that catalyzes that hydrolysis of sinapine, releasing choline and sinapate. Sinapine (O-sinapoylcholine) is the predominant phenolic compound in a complex group of sinapate esters in seeds of oilseed rape (B.napus). Sinapine has antinutritive activity and prevents the use of seed protein for food and feed. Shows broad substrate specificity towards various other choline esters, including phosphatidylcholine. The protein is Sinapine esterase of Brassica napus (Rape).